Reading from the N-terminus, the 356-residue chain is tRNA N6-adenosine threonylcarbamoyltransferase (356 aa).

Residues histidine 111 and histidine 115 each contribute to the Fe cation site. Residues leucine 143–glycine 147, aspartate 178, glycine 191, aspartate 195, and asparagine 286 contribute to the substrate site. Fe cation is bound at residue aspartate 314.

The protein belongs to the KAE1 / TsaD family. It depends on Fe(2+) as a cofactor.

Its subcellular location is the cytoplasm. The enzyme catalyses L-threonylcarbamoyladenylate + adenosine(37) in tRNA = N(6)-L-threonylcarbamoyladenosine(37) in tRNA + AMP + H(+). In terms of biological role, required for the formation of a threonylcarbamoyl group on adenosine at position 37 (t(6)A37) in tRNAs that read codons beginning with adenine. Is involved in the transfer of the threonylcarbamoyl moiety of threonylcarbamoyl-AMP (TC-AMP) to the N6 group of A37, together with TsaE and TsaB. TsaD likely plays a direct catalytic role in this reaction. This chain is tRNA N6-adenosine threonylcarbamoyltransferase, found in Sorangium cellulosum (strain So ce56) (Polyangium cellulosum (strain So ce56)).